Consider the following 59-residue polypeptide: UPF0391 membrane protein Geob_0344 (59 aa).

Transmembrane regions (helical) follow at residues 4–24 and 33–53; these read WAAI…TGIA and FLFI…ITAG.

The protein belongs to the UPF0391 family.

Its subcellular location is the cell membrane. This is UPF0391 membrane protein Geob_0344 from Geotalea daltonii (strain DSM 22248 / JCM 15807 / FRC-32) (Geobacter daltonii).